A 251-amino-acid chain; its full sequence is Ubiquinone/menaquinone biosynthesis C-methyltransferase UbiE (251 aa).

S-adenosyl-L-methionine is bound by residues T74, D95, and 123-124; that span reads NA.

Belongs to the class I-like SAM-binding methyltransferase superfamily. MenG/UbiE family.

It catalyses the reaction a 2-demethylmenaquinol + S-adenosyl-L-methionine = a menaquinol + S-adenosyl-L-homocysteine + H(+). The catalysed reaction is a 2-methoxy-6-(all-trans-polyprenyl)benzene-1,4-diol + S-adenosyl-L-methionine = a 5-methoxy-2-methyl-3-(all-trans-polyprenyl)benzene-1,4-diol + S-adenosyl-L-homocysteine + H(+). The protein operates within quinol/quinone metabolism; menaquinone biosynthesis; menaquinol from 1,4-dihydroxy-2-naphthoate: step 2/2. Its pathway is cofactor biosynthesis; ubiquinone biosynthesis. Methyltransferase required for the conversion of demethylmenaquinol (DMKH2) to menaquinol (MKH2) and the conversion of 2-polyprenyl-6-methoxy-1,4-benzoquinol (DDMQH2) to 2-polyprenyl-3-methyl-6-methoxy-1,4-benzoquinol (DMQH2). This chain is Ubiquinone/menaquinone biosynthesis C-methyltransferase UbiE, found in Shewanella piezotolerans (strain WP3 / JCM 13877).